The sequence spans 246 residues: Ribonuclease 3 (246 aa).

Positions 18–147 constitute an RNase III domain; the sequence is FQELQKKIGI…FIGALYLDQG (130 aa). Position 60 (glutamate 60) interacts with Mg(2+). The active site involves aspartate 64. Positions 133 and 136 each coordinate Mg(2+). Glutamate 136 is a catalytic residue. Residues 173–242 enclose the DRBM domain; sequence DFKSQLQELV…AQMALETLRA (70 aa).

This sequence belongs to the ribonuclease III family. Homodimer. Requires Mg(2+) as cofactor.

Its subcellular location is the cytoplasm. It carries out the reaction Endonucleolytic cleavage to 5'-phosphomonoester.. Digests double-stranded RNA. Involved in the processing of primary rRNA transcript to yield the immediate precursors to the large and small rRNAs (23S and 16S). Processes some mRNAs, and tRNAs when they are encoded in the rRNA operon. Processes pre-crRNA and tracrRNA of type II CRISPR loci if present in the organism. This chain is Ribonuclease 3, found in Geobacillus thermodenitrificans (strain NG80-2).